A 198-amino-acid chain; its full sequence is dITP/XTP pyrophosphatase (198 aa).

Thr8 to Lys13 lines the substrate pocket. Asp69 acts as the Proton acceptor in catalysis. Asp69 contacts Mg(2+). Substrate is bound by residues Ser70, Phe152 to Asp155, Lys175, and His180 to Arg181.

It belongs to the HAM1 NTPase family. Homodimer. Mg(2+) is required as a cofactor.

The enzyme catalyses XTP + H2O = XMP + diphosphate + H(+). It carries out the reaction dITP + H2O = dIMP + diphosphate + H(+). It catalyses the reaction ITP + H2O = IMP + diphosphate + H(+). In terms of biological role, pyrophosphatase that catalyzes the hydrolysis of nucleoside triphosphates to their monophosphate derivatives, with a high preference for the non-canonical purine nucleotides XTP (xanthosine triphosphate), dITP (deoxyinosine triphosphate) and ITP. Seems to function as a house-cleaning enzyme that removes non-canonical purine nucleotides from the nucleotide pool, thus preventing their incorporation into DNA/RNA and avoiding chromosomal lesions. The polypeptide is dITP/XTP pyrophosphatase (Shouchella clausii (strain KSM-K16) (Alkalihalobacillus clausii)).